Reading from the N-terminus, the 231-residue chain is Heptaprenylglyceryl phosphate synthase (231 aa).

Lysine 12 provides a ligand contact to sn-glycerol 1-phosphate. The Mg(2+) site is built by aspartate 14 and threonine 40. Sn-glycerol 1-phosphate-binding positions include 159 to 164 (YMEYSG), glycine 189, and 209 to 210 (GN).

This sequence belongs to the GGGP/HepGP synthase family. Group I subfamily. In terms of assembly, homodimer. Mg(2+) serves as cofactor.

The catalysed reaction is sn-glycerol 1-phosphate + all-trans-heptaprenyl diphosphate = 3-heptaprenyl-sn-glycero-1-phosphate + diphosphate. It participates in membrane lipid metabolism; glycerophospholipid metabolism. Its function is as follows. Prenyltransferase that catalyzes in vivo the transfer of the heptaprenyl moiety of heptaprenyl pyrophosphate (HepPP; 35 carbon atoms) to the C3 hydroxyl of sn-glycerol-1-phosphate (G1P), producing heptaprenylglyceryl phosphate (HepGP). This reaction is an ether-bond-formation step in the biosynthesis of archaea-type G1P-based membrane lipids found in Bacillales. In Anoxybacillus flavithermus (strain DSM 21510 / WK1), this protein is Heptaprenylglyceryl phosphate synthase.